Here is a 435-residue protein sequence, read N- to C-terminus: Cell adhesion molecule 2 (435 aa).

The signal sequence occupies residues 1-24; it reads MIWKRSAVLRFYSVCGLLLLGSQG. Over 25–367 the chain is Extracellular; sequence QFPLTQNVTV…SLAGQNGPDH (343 aa). An Ig-like V-type domain is found at 27-119; the sequence is PLTQNVTVVE…PVKTSKAYLT (93 aa). N-linked (GlcNAc...) asparagine glycans are attached at residues Asn31 and Asn51. 3 disulfides stabilise this stretch: Cys44–Cys104, Cys146–Cys203, and Cys248–Cys296. Ig-like C2-type domains lie at 127 to 219 and 227 to 312; these read PQIS…VAMQ and PSVK…YVLI. Asn291 is a glycosylation site (N-linked (GlcNAc...) asparagine). Residues 341–351 are compositionally biased toward low complexity; the sequence is TTSPSTSASSS. A disordered region spans residues 341 to 360; the sequence is TTSPSTSASSSSRRDPNSLA. Residues 368–388 traverse the membrane as a helical segment; that stretch reads ALIGGIVAVVVFVTLCSIFLL. The Cytoplasmic portion of the chain corresponds to 389-435; the sequence is GRYLARHKGTYLTNEAKGAEDAPDADTAIINAEGSQVNAEEKKEYFI. Residue Ser423 is modified to Phosphoserine.

The protein belongs to the nectin family. Post-translationally, glycosylation at Asn-51 reduces adhesive binding.

It localises to the cell membrane. The protein localises to the synapse. Its subcellular location is the cell projection. The protein resides in the axon. Adhesion molecule that engages in homo- and heterophilic interactions with the other nectin-like family members, leading to cell aggregation. Important for synapse organization, providing regulated trans-synaptic adhesion. Preferentially binds to oligodendrocytes. The protein is Cell adhesion molecule 2 (Cadm2) of Rattus norvegicus (Rat).